Consider the following 573-residue polypeptide: 2-succinyl-5-enolpyruvyl-6-hydroxy-3-cyclohexene-1-carboxylate synthase (573 aa).

This sequence belongs to the TPP enzyme family. MenD subfamily. In terms of assembly, homodimer. It depends on Mg(2+) as a cofactor. Requires Mn(2+) as cofactor. The cofactor is thiamine diphosphate.

The catalysed reaction is isochorismate + 2-oxoglutarate + H(+) = 5-enolpyruvoyl-6-hydroxy-2-succinyl-cyclohex-3-ene-1-carboxylate + CO2. It functions in the pathway quinol/quinone metabolism; 1,4-dihydroxy-2-naphthoate biosynthesis; 1,4-dihydroxy-2-naphthoate from chorismate: step 2/7. The protein operates within quinol/quinone metabolism; menaquinone biosynthesis. In terms of biological role, catalyzes the thiamine diphosphate-dependent decarboxylation of 2-oxoglutarate and the subsequent addition of the resulting succinic semialdehyde-thiamine pyrophosphate anion to isochorismate to yield 2-succinyl-5-enolpyruvyl-6-hydroxy-3-cyclohexene-1-carboxylate (SEPHCHC). This Shewanella putrefaciens (strain CN-32 / ATCC BAA-453) protein is 2-succinyl-5-enolpyruvyl-6-hydroxy-3-cyclohexene-1-carboxylate synthase.